The following is a 248-amino-acid chain: Mannose-binding protein C (248 aa).

The N-terminal stretch at 1–20 is a signal peptide; it reads MSLFPSLPLLLLSVVAASYS. The Collagen-like domain occupies 42–99; that stretch reads GINGFPGKDGRDGTKGEKGEPGQGLRGLQGPPGKLGPPGNPGPSGSPGPKGQKGDPGK. Positions 43 to 111 are disordered; sequence INGFPGKDGR…DCDSSLAASE (69 aa). Pro47 carries the post-translational modification 4-hydroxyproline. The span at 49–61 shows a compositional bias: basic and acidic residues; the sequence is KDGRDGTKGEKGE. A 4-hydroxyproline mark is found at Pro73, Pro79, Pro82, and Pro88. Over residues 75-87 the composition is skewed to pro residues; sequence KLGPPGNPGPSGS. Over residues 93-102 the composition is skewed to basic and acidic residues; sequence QKGDPGKSPD. A coiled-coil region spans residues 112-130; sequence RKALQTEMARIKKWLTFSL. The C-type lectin domain maps to 134-245; it reads VGNKFFLTNG…CSSSHLAVCE (112 aa). 2 cysteine pairs are disulfide-bonded: Cys155/Cys244 and Cys222/Cys236.

In terms of assembly, oligomeric complex of 3 or more homotrimers. Interacts with MASP1 and MASP2. Interacts with MEP1A and MEP1B and may inhibit their catalytic activity. Hydroxylation on proline residues within the sequence motif, GXPG, is most likely to be 4-hydroxy as this fits the requirement for 4-hydroxylation in vertebrates.

It localises to the secreted. Functionally, calcium-dependent lectin involved in innate immune defense. Binds mannose, fucose and N-acetylglucosamine on different microorganisms and activates the lectin complement pathway. Binds to late apoptotic cells, as well as to apoptotic blebs and to necrotic cells, but not to early apoptotic cells, facilitating their uptake by macrophages. This chain is Mannose-binding protein C (MBL2), found in Pongo pygmaeus (Bornean orangutan).